The primary structure comprises 137 residues: Basic phospholipase A2 DsM-S1 (137 aa).

Positions Met-1–Gly-16 are cleaved as a signal peptide. 7 disulfides stabilise this stretch: Cys-42–Cys-131, Cys-44–Cys-60, Cys-59–Cys-111, Cys-65–Cys-137, Cys-66–Cys-104, Cys-73–Cys-97, and Cys-91–Cys-102. Ca(2+)-binding residues include Tyr-43, Gly-45, and Gly-47. The active site involves His-63. Asp-64 contributes to the Ca(2+) binding site. Residue Asp-105 is part of the active site.

This sequence belongs to the phospholipase A2 family. Group II subfamily. D49 sub-subfamily. Ca(2+) is required as a cofactor. As to expression, expressed by the venom gland.

It localises to the secreted. The catalysed reaction is a 1,2-diacyl-sn-glycero-3-phosphocholine + H2O = a 1-acyl-sn-glycero-3-phosphocholine + a fatty acid + H(+). Snake venom phospholipase A2 (PLA2) that is neurotoxic. PLA2 catalyzes the calcium-dependent hydrolysis of the 2-acyl groups in 3-sn-phosphoglycerides. This chain is Basic phospholipase A2 DsM-S1, found in Daboia siamensis (Eastern Russel's viper).